A 229-amino-acid chain; its full sequence is Ribonuclease HII (229 aa).

Residues 34–223 (WPVAGADEAG…LRKVEDGPQM (190 aa)) form the RNase H type-2 domain. Residues Asp-40, Glu-41, and Asp-131 each contribute to the a divalent metal cation site.

This sequence belongs to the RNase HII family. Requires Mn(2+) as cofactor. Mg(2+) is required as a cofactor.

It is found in the cytoplasm. It catalyses the reaction Endonucleolytic cleavage to 5'-phosphomonoester.. Endonuclease that specifically degrades the RNA of RNA-DNA hybrids. The protein is Ribonuclease HII of Rhizobium leguminosarum bv. trifolii (strain WSM2304).